Here is a 267-residue protein sequence, read N- to C-terminus: DNA repair protein RecO (267 aa).

This sequence belongs to the RecO family.

Functionally, involved in DNA repair and RecF pathway recombination. The chain is DNA repair protein RecO from Prochlorococcus marinus (strain MIT 9303).